The sequence spans 649 residues: Phospholipase A1 PLIP1, chloroplastic (649 aa).

The transit peptide at 1–67 directs the protein to the chloroplast; that stretch reads MAFNTAMAST…NNRILAVSVR (67 aa). The GXSXG motif lies at 420 to 424; it reads GHSLG. Catalysis depends on Ser422, which acts as the Acyl-ester intermediate. Active-site charge relay system residues include Asp483 and His593.

This sequence belongs to the AB hydrolase superfamily. Lipase family.

The protein localises to the plastid. It is found in the chloroplast thylakoid membrane. It catalyses the reaction a 1,2-diacyl-sn-glycero-3-phosphocholine + H2O = a 2-acyl-sn-glycero-3-phosphocholine + a fatty acid + H(+). It carries out the reaction a 1,2-diacyl-3-O-(beta-D-galactosyl)-sn-glycerol + 2 H2O = 3-beta-D-galactosyl-sn-glycerol + 2 a fatty acid + 2 H(+). In terms of biological role, sn-1-specific phospholipase A1 involved in seed oil biosynthesis. Hydrolyzes polyunsaturated acyl groups from a unique chloroplast-specific phosphatidylglycerol (PG) that contains 16:1 delta 3-trans as its second acyl group. The polyunsaturated acyl groups released by PLIP1 are exported from the chloroplast, reincorporated into phosphatidylcholine (PC), and ultimately enter seed triacylglycerol (TAG). In vitro, possesses broad substrate specificity. Can hydrolyze the galactolipid monogalactosyldiacylglycerol (MGDG), and the phoshpolipids phosphatidylcholine (PC), phosphatidylethanolamine (PE), phosphatidic acid (PA), phosphatidylserine (PS) phosphatidylglycerol (PG) and phosphatidylinositol (PI). The sequence is that of Phospholipase A1 PLIP1, chloroplastic from Arabidopsis thaliana (Mouse-ear cress).